Reading from the N-terminus, the 204-residue chain is MSNQEKKMHEEELQQQETVEADTEAEAEAVGTDADIEWNEESALDETEAKIAQLEAALLSSEAKVKEQQDAVLRAKAEVENMRRRTEQEIDKARKFALNKFAEELLPIIDNLERAIQAADTESEVVQPILEGITLTHKTFIDTISKFGLKEINPEGEAFNPELHQAMSIQESADHESNTVMFVMQKGYELNGRVIRPAMVMVAK.

A compositionally biased stretch (basic and acidic residues) spans M1 to E12. The interval M1–E37 is disordered.

Belongs to the GrpE family. As to quaternary structure, homodimer.

It is found in the cytoplasm. In terms of biological role, participates actively in the response to hyperosmotic and heat shock by preventing the aggregation of stress-denatured proteins, in association with DnaK and GrpE. It is the nucleotide exchange factor for DnaK and may function as a thermosensor. Unfolded proteins bind initially to DnaJ; upon interaction with the DnaJ-bound protein, DnaK hydrolyzes its bound ATP, resulting in the formation of a stable complex. GrpE releases ADP from DnaK; ATP binding to DnaK triggers the release of the substrate protein, thus completing the reaction cycle. Several rounds of ATP-dependent interactions between DnaJ, DnaK and GrpE are required for fully efficient folding. This Vibrio proteolyticus (Aeromonas proteolytica) protein is Protein GrpE.